Here is a 1706-residue protein sequence, read N- to C-terminus: MAARNSLTPQQGLGFFGLLILLCSAVLGKSQMCEVETGQTNIILDIEESRESFIGQPTTPPELPIFGDPDTEIALNLVFPKGQPIFQLNGKKLQLLQPLDRDEENLSHIVFQVSCTTRSTGKKRTIPIIVRVSDINDNAPRFMNTPYEVTVPESTPVGTTIFRNIQALDKDAGVNGLVEYFIAEGSPNSTNVEKYSADGYGTFAISFPHQGQVTVAKTLDFEKIQTYYLTIVASDRARNTADRLSSTTTLTVNIADSNDLDPSFIYSGCVSLDGACINPEYSASVPAGSLLGVLTVLPERIQAVDLDTINSPIRYSFASGMPGNYADYFQIDESTGVLKQTKAVDTSTAKKYDIIVKAEEVSPGPQRFTTAKLEIFVKPVDANPPVISSSQAEGYVDENSPIGTRVLDAHGNPISFMTTDADLSDSDPKPDYIYELTTPSFNVTGDGILVVNEENLDRDPPAPGRFKFQVVAREPRTNAASAPLSLTVHLRDVNDNAPKLAMVAPISITAGDQSESRLVTQVTATDNDEGPNAVVTYSIYHVSNNGIQKFTINATTGEIRTQGRLLAGEQYSITVQATDIGGLSSQAIVEVSVTPGPNTKPPRFQKPIYEVQVSEGAEINSTVTVVHAEDPENDAVVYSIISGNDLRQFAVGQESGVIIVIRKLDRESLTRYQLILKAEDTGGLSSSATVNIKVTDINDKNPEFEASTLPYVFQVEEGKAQASVGVVHATDADEGINAEITYSIPTDIPFTINATSGEILTAKELDYEQLNEYKFVVTAKDGAPDARLGTASVTVMVLDLPDEVPKFSDARIDVHIPENEENFLVATVQAFDPDSMPEITYVLRKGNAELFKVSEKSGEVRTIKGLDYESQKQHQLTIGTIENDGNGPGDTILLVVDVEDRNDLPPRFITVPDPVTVNDDQGIGTIIATLPAIDGDGTSPGNVVRYEIVGRGKAPKYFQVDPDTGAVRIRDELRKEEDTEYQVDIRAYDLGEPQLSSVAPLRVDVHHLLSSGNNEIKLDNKLESGTGMSSESIGLAFSDDSYTTSVPESMEANSTLKLIQIVNSKTSGDGPPAFRCEFVSGNGGGIFNLSSADHGCNLLLIQPLDFENKSSYSLQLRLTSHRYFVNPLKDTTSVEIIVQDENDNAPEFEFNRLRGQQDTFYTVVTEEMDVDTTILQVRATDRDSGKFGTVRYTLYDDDENRVNMPTSFFMMSEDTGVLRTAKHFKNENDFPLTFLVEARDSDGQEQGSHRTRARIVVNKLADINRMALSFPNAAPSDLRNYYTELEELLDKKTGLVSGIERMSSQKYLAKNGSVIENPAATDIWFYLIDPKTEQLVSRKDSIVETTLLEPAARSELNIALPRATAENISFPLERKEHVHKVKAAVAIDNEVFPFTLIAISLVILILGTIGIIYICISWSKYKNFKQRMRQYSSTNPPRYDPVIVNQQASSASETIANMKEYETQMLAMAVPPDVDDDLQLDFSAKNHAFSLDNVSYITHKENTNGGGQSSPSHSDATTATIATLRRHKNLNNASMNNNLAINNRQNTFNRTLEMNTRNNANPLASPPNGALSGTLTLGRIKHQNSNHYQNGAYNIDPTGPNNMAHAKNNAYSTMGRRGNTFGDVGLLNGNGELMNATLGRNGQLNNRLYGGEVPITNPLFQRSNSDHNHLSSTNENVSFGKRDYGQIGFSYLNDLDRSEVETTTEL.

The first 28 residues, 1 to 28, serve as a signal peptide directing secretion; it reads MAARNSLTPQQGLGFFGLLILLCSAVLG. The Extracellular portion of the chain corresponds to 29-1395; it reads KSQMCEVETG…AIDNEVFPFT (1367 aa). 11 consecutive Cadherin domains span residues 68–142, 143–264, 277–387, 388–500, 519–604, 605–704, 707–807, 808–908, 909–1005, 1038–1148, and 1156–1270; these read DPDT…APRF, MNTP…DPSF, INPE…PPVI, SSSQ…APKL, VTQV…PPRF, QKPI…NPEF, STLP…VPKF, SDAR…PPRF, ITVP…RVDV, SDDS…APEF, and QQDT…ALSF. N-linked (GlcNAc...) asparagine glycosylation is found at Asn-105 and Asn-188. 4 N-linked (GlcNAc...) asparagine glycosylation sites follow: Asn-442, Asn-553, Asn-620, and Asn-753. Residues Asn-1053, Asn-1088, and Asn-1108 are each glycosylated (N-linked (GlcNAc...) asparagine). N-linked (GlcNAc...) asparagine glycosylation is found at Asn-1311 and Asn-1367. The chain crosses the membrane as a helical span at residues 1396–1416; it reads LIAISLVILILGTIGIIYICI. Over 1417 to 1706 the chain is Cytoplasmic; sequence SWSKYKNFKQ…RSEVETTTEL (290 aa).

As to quaternary structure, interacts (via the cytoplasmic domain) with ck. Interacts (via the cytoplasmic domain) with Cul1 and Ubr3.

Its subcellular location is the apical cell membrane. The protein localises to the endosome membrane. It localises to the cell projection. The protein resides in the microvillus membrane. Functionally, cadherin that functions in epithelial morphogenesis and the intestine epithelial immune response. Essential for female fertility. Regulates the length and organization of apical microvilli in developing follicle cells and salivary glands. Function in the follicle cell is essential for egg development as the microvilli secrete eggshell material such as the vitelline membrane. Acts at least in part by regulating the recruitment of the myosin ck to the follicle cell microvilli. Also required to regulate cell rearrangements during salivary tube elongation, possibly by modulating cellular adhesion between the apical surface and apical extracellular matrix during epithelial tube elongation. May also function in cellular adhesion during the development of other tubular epithelia such as the trachea. Possibly functions as an apical membrane determinant which acts in apical membrane expansion during salivary and tracheal epithelial tube elongation. In salivary gland development, this function is independent of the other apical membrane determinants crb and sas. Essential downstream component of a hh-signaling pathway which regulates the Duox-dependent gut epithelial immune response to bacterial uracil; required for endosome formation in the enterocyte and activating norpA-dependent Ca2+ mobilization, which are essential steps in the Duox-dependent production of reactive oxygen species (ROS) in response to intestinal bacterial infection. This chain is Cadherin-99C, found in Drosophila melanogaster (Fruit fly).